A 129-amino-acid chain; its full sequence is Serum amyloid A protein (129 aa).

An N-terminal signal peptide occupies residues 1–18 (MKLFTGLVFCSLVLGVSS). Pyrrolidone carboxylic acid is present on Gln-19. A disordered region spans residues 88 to 129 (FFRHGNSGHGAEDSKADQAANEWGRSGKDPNHFRPAGLPSKY). Positions 112–129 (RSGKDPNHFRPAGLPSKY) are cleaved as a propeptide — often cleaved during amyloidogenesis.

It belongs to the SAA family. In terms of tissue distribution, expressed by the liver; secreted in plasma.

The protein resides in the secreted. In terms of biological role, major acute phase reactant. Apolipoprotein of the HDL complex. The polypeptide is Serum amyloid A protein (SAA1) (Felis catus (Cat)).